The primary structure comprises 225 residues: NAD(P)H-quinone oxidoreductase subunit K, chloroplastic (225 aa).

Positions 43, 44, 108, and 139 each coordinate [4Fe-4S] cluster.

The protein belongs to the complex I 20 kDa subunit family. In terms of assembly, NDH is composed of at least 16 different subunits, 5 of which are encoded in the nucleus. The cofactor is [4Fe-4S] cluster.

The protein resides in the plastid. Its subcellular location is the chloroplast thylakoid membrane. It carries out the reaction a plastoquinone + NADH + (n+1) H(+)(in) = a plastoquinol + NAD(+) + n H(+)(out). The catalysed reaction is a plastoquinone + NADPH + (n+1) H(+)(in) = a plastoquinol + NADP(+) + n H(+)(out). Functionally, NDH shuttles electrons from NAD(P)H:plastoquinone, via FMN and iron-sulfur (Fe-S) centers, to quinones in the photosynthetic chain and possibly in a chloroplast respiratory chain. The immediate electron acceptor for the enzyme in this species is believed to be plastoquinone. Couples the redox reaction to proton translocation, and thus conserves the redox energy in a proton gradient. The sequence is that of NAD(P)H-quinone oxidoreductase subunit K, chloroplastic from Lolium perenne (Perennial ryegrass).